The following is a 371-amino-acid chain: MPASITGLLRPDIAALEPYTPIVPLETLAERLGLPVERIIKLDANENPYGPSPRALAALAAVEHDAPHRYAIYPDPDHTRLRAALSRYVGQPPERIICGAGSDELIDLIMRAVLRPGDVMVDCPPTFAMYSFDAALYGARIVAVPRTEQFDVDVEGVAEAVERDGAKLLFLAAPNNPTGTPLARTTVERLLDLPIILAIDEAYAEFAGTSVIDLVGTRPNLVVLRTFSKWAGLAGLRIGYAAMHEDVITYLWKIKQPYNVNVAAEVAAVASLDDLDERLSTVARIVAERERLAAALAALPGIHVYPSAANFLLCRMTSGGAARARAIRDTLAQRGILIRYFNRPGIDDCIRISVGRPEQNDALLDVLKEVA.

Lys-229 is subject to N6-(pyridoxal phosphate)lysine.

It belongs to the class-II pyridoxal-phosphate-dependent aminotransferase family. Histidinol-phosphate aminotransferase subfamily. As to quaternary structure, homodimer. It depends on pyridoxal 5'-phosphate as a cofactor.

It catalyses the reaction L-histidinol phosphate + 2-oxoglutarate = 3-(imidazol-4-yl)-2-oxopropyl phosphate + L-glutamate. The protein operates within amino-acid biosynthesis; L-histidine biosynthesis; L-histidine from 5-phospho-alpha-D-ribose 1-diphosphate: step 7/9. This Roseiflexus castenholzii (strain DSM 13941 / HLO8) protein is Histidinol-phosphate aminotransferase.